Here is a 543-residue protein sequence, read N- to C-terminus: Secreted effector protein SptP (543 aa).

The tract at residues 35-139 is chaperone-binding; the sequence is TDKAYVAPEK…FINLIKNKDN (105 aa). The region spanning 162–293 is the Bacterial Rho-GAP domain; sequence DVGAESKQPL…TAELEKIKAG (132 aa). The Tyrosine-protein phosphatase domain occupies 315–543; it reads IPINQQTQVK…QAQLLMTTAS (229 aa). C481 acts as the Phosphocysteine intermediate in catalysis.

Forms a complex with SicP.

Its subcellular location is the secreted. It localises to the host cytoplasm. It catalyses the reaction O-phospho-L-tyrosyl-[protein] + H2O = L-tyrosyl-[protein] + phosphate. Functionally, effector proteins function to alter host cell physiology and promote bacterial survival in host tissues. This protein includes tyrosine phosphatase and GTPase activating protein (GAP) activities. After bacterial internalization, GAP mediates the reversal of the cytoskeletal changes induced by SopE. This function is independent of its tyrosine phosphatase activity, which remains unclear. This Salmonella typhi protein is Secreted effector protein SptP (sptP).